A 165-amino-acid chain; its full sequence is Nucleotide-binding protein TGRD_519 (165 aa).

It belongs to the YajQ family.

Its function is as follows. Nucleotide-binding protein. This chain is Nucleotide-binding protein TGRD_519, found in Endomicrobium trichonymphae.